An 88-amino-acid polypeptide reads, in one-letter code: Putative membrane protein insertion efficiency factor (88 aa).

This sequence belongs to the UPF0161 family.

It is found in the cell inner membrane. Could be involved in insertion of integral membrane proteins into the membrane. The protein is Putative membrane protein insertion efficiency factor of Coxiella burnetii (strain Dugway 5J108-111).